The following is a 359-amino-acid chain: MIATQAKLVYQLNKYYNERCQARKAAIAKTIREVCKVVSDVLKEVEVQEPRFISSLSEIDARYEGMEVIAPNEFEVVLYLNQMGVFNFVDDGSLPGCAVLKLSDGRKRSMSLWVEFITASGYLSARKIRSRFQTLVAQAVDKCSYRDVVKMVADTSEVKLRIRERYVVQITPAFKCTGIWPRSAAQWPMPHIPWPGPNRVAEVKAEGFNLLSKECYSLTGKQSSAESDAWVLQFAEAENRLLMSGCRKKCLSVLKTLRDRHLELPGQPLNNYHMKTLLLYECEKHPRETDWDESCLGDRLNGILLQLISCLQCRRCPHYFLPNLDLFQGKPHSALETAAKQTWRLAREILTNAKSLDKL.

The protein belongs to the mab-21 family.

It localises to the nucleus. The protein localises to the cytoplasm. Its function is as follows. Required for eye morphogenesis. May promote the survival of proliferating retinal progenitor cells. The sequence is that of Protein mab-21-like 2 (mab21l2) from Danio rerio (Zebrafish).